The following is a 217-amino-acid chain: Octanoyltransferase (217 aa).

Residues 32–207 enclose the BPL/LPL catalytic domain; it reads SESHDELWIV…TFSQLLGYQH (176 aa). Residues 71–78, 138–140, and 151–153 each bind substrate; these read RGGQVTYH, SLG, and GLA. Cys169 serves as the catalytic Acyl-thioester intermediate.

This sequence belongs to the LipB family.

The protein resides in the cytoplasm. It carries out the reaction octanoyl-[ACP] + L-lysyl-[protein] = N(6)-octanoyl-L-lysyl-[protein] + holo-[ACP] + H(+). It functions in the pathway protein modification; protein lipoylation via endogenous pathway; protein N(6)-(lipoyl)lysine from octanoyl-[acyl-carrier-protein]: step 1/2. Its function is as follows. Catalyzes the transfer of endogenously produced octanoic acid from octanoyl-acyl-carrier-protein onto the lipoyl domains of lipoate-dependent enzymes. Lipoyl-ACP can also act as a substrate although octanoyl-ACP is likely to be the physiological substrate. In Shewanella baltica (strain OS155 / ATCC BAA-1091), this protein is Octanoyltransferase.